The chain runs to 179 residues: Natural killer cells antigen CD94 (179 aa).

Topologically, residues 1-10 are cytoplasmic; it reads MAVFKTTLWW. Residues 11–31 form a helical; Signal-anchor for type II membrane protein membrane-spanning segment; that stretch reads LISGTLGIICLSLTATLGILL. At 32 to 179 the chain is on the extracellular side; that stretch reads KNSFTKLSIE…NRYICKQQLI (148 aa). 2 disulfides stabilise this stretch: C58–C70 and C61–C72. The 108-residue stretch at 68 to 175 folds into the C-type lectin domain; that stretch reads YRCNCYFISS…CEDKNRYICK (108 aa). N-linked (GlcNAc...) asparagine glycans are attached at residues N83 and N132. Cystine bridges form between C89–C174 and C152–C166.

In terms of assembly, can form disulfide-bonded heterodimer with NKG2 family members KLRC1 and KLRC2. KLRD1-KLRC1 heterodimer interacts with peptide-bound MHC-E-B2M heterotrimeric complex. KLRD1 plays a prominent role in directly interacting with MHC-E. KLRD1-KLRC1 interacts with much higher affinity with peptide-bound MHC-E-B2M than KLRD1-KLRC2. Interacts with the adapter protein TYROBP/DAP12; this interaction is required for cell surface expression and cell activation. Natural killer cells.

Its subcellular location is the cell membrane. In terms of biological role, immune receptor involved in self-nonself discrimination. In complex with KLRC1 or KLRC2 on cytotoxic and regulatory lymphocyte subsets, recognizes non-classical major histocompatibility (MHC) class Ib molecule MHC-E loaded with self-peptides derived from the signal sequence of classical MHC class Ia and non-classical MHC class Ib molecules. Enables cytotoxic cells to monitor the expression of MHC class I molecules in healthy cells and to tolerate self. Primarily functions as a ligand binding subunit as it lacks the capacity to signal. KLRD1-KLRC1 acts as an immune inhibitory receptor. Key inhibitory receptor on natural killer (NK) cells that regulates their activation and effector functions. Dominantly counteracts T cell receptor signaling on a subset of memory/effector CD8-positive T cells as part of an antigen-driven response to avoid autoimmunity. On intraepithelial CD8-positive gamma-delta regulatory T cells triggers TGFB1 secretion, which in turn limits the cytotoxic programming of intraepithelial CD8-positive alpha-beta T cells, distinguishing harmless from pathogenic antigens. In MHC-E-rich tumor microenvironment, acts as an immune inhibitory checkpoint and may contribute to progressive loss of effector functions of NK cells and tumor-specific T cells, a state known as cell exhaustion. Upon MHC-E-peptide binding, transmits intracellular signals through KLRC1 immunoreceptor tyrosine-based inhibition motifs (ITIMs) by recruiting INPP5D/SHIP-1 and INPPL1/SHIP-2 tyrosine phosphatases to ITIMs, and ultimately opposing signals transmitted by activating receptors through dephosphorylation of proximal signaling molecules. Its function is as follows. KLRD1-KLRC2 acts as an immune activating receptor. On cytotoxic lymphocyte subsets recognizes MHC-E loaded with signal sequence-derived peptides from non-classical MHC class Ib MHC-G molecules, likely playing a role in the generation and effector functions of adaptive NK cells and in maternal-fetal tolerance during pregnancy. Regulates the effector functions of terminally differentiated cytotoxic lymphocyte subsets, and in particular may play a role in adaptive NK cell response to viral infection. Upon MHC-E-peptide binding, transmits intracellular signals via the adapter protein TYROBP/DAP12, triggering the phosphorylation of proximal signaling molecules and cell activation. The chain is Natural killer cells antigen CD94 (KLRD1) from Pongo pygmaeus (Bornean orangutan).